We begin with the raw amino-acid sequence, 306 residues long: D-alanine--D-alanine ligase (306 aa).

Positions 107–303 (KHLFKSAGLS…FEQLVVRILE (197 aa)) constitute an ATP-grasp domain. An ATP-binding site is contributed by 134–189 (IMQQFKKVMVKPSHEGSSIGMAQASTPQELEDALSNAFKFDSQVLVEQWISGREFT). The Mg(2+) site is built by D257, E270, and N272.

The protein belongs to the D-alanine--D-alanine ligase family. It depends on Mg(2+) as a cofactor. Mn(2+) serves as cofactor.

The protein resides in the cytoplasm. It catalyses the reaction 2 D-alanine + ATP = D-alanyl-D-alanine + ADP + phosphate + H(+). It functions in the pathway cell wall biogenesis; peptidoglycan biosynthesis. Its function is as follows. Cell wall formation. In Pseudoalteromonas translucida (strain TAC 125), this protein is D-alanine--D-alanine ligase.